The chain runs to 137 residues: Protein Turandot X (137 aa).

The signal sequence occupies residues Met1–Ala24.

It belongs to the Turandot family.

Its subcellular location is the secreted. In terms of biological role, a humoral factor that may play a role in stress tolerance. The polypeptide is Protein Turandot X (Drosophila persimilis (Fruit fly)).